The sequence spans 398 residues: T-box transcription factor TBX1 (398 aa).

Positions 23-72 are disordered; it reads AAGGFPGAASPGADPYGPREPPPPPPRYDPCAAAAPGAPGPPPPPHAYPF. Over residues 29 to 38 the composition is skewed to low complexity; sequence GAASPGADPY. Composition is skewed to pro residues over residues 40-50 and 60-69; these read PREPPPPPPRY and APGPPPPPHA. Residues 119–297 constitute a DNA-binding region (T-box); it reads LWDEFNQLGT…SNPFAKGFRD (179 aa).

As to quaternary structure, binds DNA as a dimer. Interacts with DSCR6. Interacts with NKX2-5.

The protein resides in the nucleus. Its function is as follows. Transcription factor that plays a key role in cardiovascular development by promoting pharyngeal arch segmentation during embryonic development. Also involved in craniofacial muscle development. Together with NKX2-5, acts as a regulator of asymmetric cardiac morphogenesis by promoting expression of PITX2. Acts upstream of TBX1 for the formation of the thymus and parathyroid glands from the third pharyngeal pouch. Required for hair follicle stem cell self-renewal. Binds to the palindromic T site 5'-TTCACACCTAGGTGTGAA-3' DNA sequence. The polypeptide is T-box transcription factor TBX1 (Homo sapiens (Human)).